The primary structure comprises 553 residues: MKRPRSRLWYDGLENTPHRVYLRAIGFTSDDFQKPLIAVVAAWSEAGPCNFNVLPGSLRVKEGVRSAGGVPLAVPTIVVNDGINMGTPGMRYSLISRELIADTIEAQVASHGFDGWVGIGGCDKTQPGIMMAMARLDLPSIYIYGGTAEHGVLDGETVTVQSAFEAVGAYLKGLIDEERLYEIEKAAMPTPGTCQGLFTANTMAILAEALGLSPLGSASPPATSSERARELARAGALAVGLVETGLTPRRILTYEAFYNAIVTLMAISGSTNAVLHLLAIAREAGVKLALDDFDEASRKVPVIAALAPAGKYTMVDLHNVGGAPVILRKLLDRGLLYGEAVTVEGVEIGKLLSKWEPRTDYNILYDFDKPYKPHAGLRILRGSLAPRGAVMKIGASGILKFKGAAKVFDSEEEAFKAIERGYVEEGDVVVVRYVGPKGAPGMPEMLKITAAIVGAGLGEKVALITDGRFSGATRGVMVGHAAPEAAVGGPIALVENGDEIVIDGEKGTLDVLLGGDELARRRDKWSPPPLPKQGLLRKYAKLVTQADEGAVTH.

[2Fe-2S] cluster is bound at residue C49. D81 serves as a coordination point for Mg(2+). [2Fe-2S] cluster is bound at residue C122. The Mg(2+) site is built by D123 and K124. K124 carries the post-translational modification N6-carboxylysine. C194 provides a ligand contact to [2Fe-2S] cluster. A Mg(2+)-binding site is contributed by E444. S470 serves as the catalytic Proton acceptor.

Belongs to the IlvD/Edd family. Homodimer. Requires [2Fe-2S] cluster as cofactor. Mg(2+) serves as cofactor.

The enzyme catalyses (2R)-2,3-dihydroxy-3-methylbutanoate = 3-methyl-2-oxobutanoate + H2O. The catalysed reaction is (2R,3R)-2,3-dihydroxy-3-methylpentanoate = (S)-3-methyl-2-oxopentanoate + H2O. Its pathway is amino-acid biosynthesis; L-isoleucine biosynthesis; L-isoleucine from 2-oxobutanoate: step 3/4. It functions in the pathway amino-acid biosynthesis; L-valine biosynthesis; L-valine from pyruvate: step 3/4. Functions in the biosynthesis of branched-chain amino acids. Catalyzes the dehydration of (2R,3R)-2,3-dihydroxy-3-methylpentanoate (2,3-dihydroxy-3-methylvalerate) into 2-oxo-3-methylpentanoate (2-oxo-3-methylvalerate) and of (2R)-2,3-dihydroxy-3-methylbutanoate (2,3-dihydroxyisovalerate) into 2-oxo-3-methylbutanoate (2-oxoisovalerate), the penultimate precursor to L-isoleucine and L-valine, respectively. The chain is Dihydroxy-acid dehydratase from Aeropyrum pernix (strain ATCC 700893 / DSM 11879 / JCM 9820 / NBRC 100138 / K1).